Consider the following 326-residue polypeptide: Adenosine receptor A1 (326 aa).

Over 1-10 (MPHSVSAFQA) the chain is Extracellular. A helical transmembrane segment spans residues 11-33 (AYIGIEVLIALVSVPGNVLVIWA). Topologically, residues 34-46 (VKVNQALRDATFC) are cytoplasmic. A helical membrane pass occupies residues 47 to 69 (FIASLAVADVAVGALVIPLAILI). Residues 70 to 80 (NIGPQTYFHTC) lie on the Extracellular side of the membrane. C80 and C169 are joined by a disulfide. The helical transmembrane segment at 81–102 (LMVACPVLILTQSSILALLAIA) threads the bilayer. The Cytoplasmic portion of the chain corresponds to 103 to 123 (VDRYLRVKIPLRYKTVVTPRR). Residues 124-146 (AAVAIAGCWILSLVVGLTPMFGW) traverse the membrane as a helical segment. The Extracellular portion of the chain corresponds to 147–176 (NNLSKIEMAWAANGSVGEPVIKCEFEKVIS). N-linked (GlcNAc...) asparagine glycosylation occurs at N159. The chain crosses the membrane as a helical span at residues 177–201 (MEYMVYFNFFVWVLPPLLLMVLIYL). Residues 202 to 235 (EVFYLIRKQLSKKVSASSGDPQKYYGKELKIAKS) lie on the Cytoplasmic side of the membrane. A helical membrane pass occupies residues 236 to 259 (LALILFLFALSWLPLHILNCITLF). The Extracellular portion of the chain corresponds to 260 to 267 (CPTCHKPT). Residues 268–292 (ILTYIAIFLTHGNSAMNPIVYAFRI) traverse the membrane as a helical segment. Topologically, residues 293-326 (QKFRVTFLKIWNDHFRCQPEPPIDEDLPEEKVDD) are cytoplasmic. Residue C309 is the site of S-palmitoyl cysteine attachment.

Belongs to the G-protein coupled receptor 1 family.

The protein resides in the cell membrane. Its function is as follows. Receptor for adenosine. The activity of this receptor is mediated by G proteins which inhibit adenylyl cyclase. The protein is Adenosine receptor A1 (ADORA1) of Cavia porcellus (Guinea pig).